The following is a 197-amino-acid chain: Holliday junction branch migration complex subunit RuvA (197 aa).

The segment at 1–64 (MIGRLRGIVA…EDSVSLYGFL (64 aa)) is domain I. Positions 65 to 143 (REGERRLFRD…QFGAGGALPT (79 aa)) are domain II. Residues 144–153 (GSGPAPADPL) are flexible linker. Positions 153 to 197 (LSDATVALQQLGYKPAEAARMARDAFNEGDEVATVIRKALQSALR) are domain III.

The protein belongs to the RuvA family. Homotetramer. Forms an RuvA(8)-RuvB(12)-Holliday junction (HJ) complex. HJ DNA is sandwiched between 2 RuvA tetramers; dsDNA enters through RuvA and exits via RuvB. An RuvB hexamer assembles on each DNA strand where it exits the tetramer. Each RuvB hexamer is contacted by two RuvA subunits (via domain III) on 2 adjacent RuvB subunits; this complex drives branch migration. In the full resolvosome a probable DNA-RuvA(4)-RuvB(12)-RuvC(2) complex forms which resolves the HJ.

The protein resides in the cytoplasm. The RuvA-RuvB-RuvC complex processes Holliday junction (HJ) DNA during genetic recombination and DNA repair, while the RuvA-RuvB complex plays an important role in the rescue of blocked DNA replication forks via replication fork reversal (RFR). RuvA specifically binds to HJ cruciform DNA, conferring on it an open structure. The RuvB hexamer acts as an ATP-dependent pump, pulling dsDNA into and through the RuvAB complex. HJ branch migration allows RuvC to scan DNA until it finds its consensus sequence, where it cleaves and resolves the cruciform DNA. This Stenotrophomonas maltophilia (strain K279a) protein is Holliday junction branch migration complex subunit RuvA.